Consider the following 503-residue polypeptide: MHVLFLGDLMWIYLLLLCCASCNGRPDPRKRDALIGLEASRRTGGDITLNEREKLLDGKLQKLKQHDMEAGQFPPSMHFFKAKRLIDQSPVFNLIQKMPKGAALHVHDFAMVSVDWLVKNVTYRENCYVCFTDKQTVQFIFSSGPPASSSYCSSWTLLRSLREKIKNTTELDNSFIRNLTLFTEDPDRAYPNQDTVWERFEQVFLVAYGLVTYAPVFKDYLYEGLRQFYEDNIMYVEIRALLPQTYELDGRLNDKDWSMAACQEVVNQFKKHHPDFIGARVIFTVHRKINATEAVKTVEEAMILRRNFPDVMAGFDFVGQEDLGRPLWYFKDALSLPEDKGFNLPYFFHAGETDSQGTDVDQNLMDALLFNTTRIGHGFALARHPVVKEMARKMDVPIEVCPISNQVLKLVSDLRDHPAAVLMAEGHPLVISSDDPAVFGATALSHDFYEAFMGFGGMSFNLGTLKELALNSLRYSTLPSQRKEEAIDALLVKWDKFVWESLL.

Residues 1-24 (MHVLFLGDLMWIYLLLLCCASCNG) form the signal peptide. Residues His105 and His107 each coordinate Zn(2+). Asp108 serves as a coordination point for substrate. Asn120 carries N-linked (GlcNAc...) asparagine glycosylation. Cys130 and Cys152 are disulfide-bonded. N-linked (GlcNAc...) asparagine glycosylation is found at Asn167 and Asn178. Substrate contacts are provided by residues 197 to 204 (WERFEQVF) and His286. N-linked (GlcNAc...) asparagine glycosylation is present at Asn290. Position 319 (Gly319) interacts with substrate. Residue His349 participates in Zn(2+) binding. The Proton donor role is filled by Glu352. Asn371 carries N-linked (GlcNAc...) asparagine glycosylation. His377 (proton acceptor) is an active-site residue. Asp434 is a Zn(2+) binding site. Position 435 (Asp435) interacts with substrate.

It belongs to the metallo-dependent hydrolases superfamily. Adenosine and AMP deaminases family. ADGF subfamily. Requires Zn(2+) as cofactor.

The protein localises to the secreted. The enzyme catalyses adenosine + H2O + H(+) = inosine + NH4(+). Adenosine deaminase that may contribute to the degradation of extracellular adenosine, a signaling molecule that controls a variety of cellular responses. May play a role in the regulation of cell proliferation. The polypeptide is Adenosine deaminase 2-A (Danio rerio (Zebrafish)).